Here is a 166-residue protein sequence, read N- to C-terminus: Endoribonuclease YbeY (166 aa).

Residues His-132, His-136, and His-142 each coordinate Zn(2+).

Belongs to the endoribonuclease YbeY family. Zn(2+) is required as a cofactor.

The protein resides in the cytoplasm. Functionally, single strand-specific metallo-endoribonuclease involved in late-stage 70S ribosome quality control and in maturation of the 3' terminus of the 16S rRNA. The chain is Endoribonuclease YbeY from Clostridium acetobutylicum (strain ATCC 824 / DSM 792 / JCM 1419 / IAM 19013 / LMG 5710 / NBRC 13948 / NRRL B-527 / VKM B-1787 / 2291 / W).